We begin with the raw amino-acid sequence, 175 residues long: Shikimate kinase (175 aa).

Residue 14–19 (GAGKST) coordinates ATP. Residue serine 18 participates in Mg(2+) binding. Residues aspartate 36, arginine 60, and glycine 82 each contribute to the substrate site. Residue arginine 120 participates in ATP binding. Arginine 140 contributes to the substrate binding site. Position 157 (glutamine 157) interacts with ATP.

Belongs to the shikimate kinase family. In terms of assembly, monomer. It depends on Mg(2+) as a cofactor.

The protein localises to the cytoplasm. The enzyme catalyses shikimate + ATP = 3-phosphoshikimate + ADP + H(+). The protein operates within metabolic intermediate biosynthesis; chorismate biosynthesis; chorismate from D-erythrose 4-phosphate and phosphoenolpyruvate: step 5/7. Functionally, catalyzes the specific phosphorylation of the 3-hydroxyl group of shikimic acid using ATP as a cosubstrate. This is Shikimate kinase from Mannheimia succiniciproducens (strain KCTC 0769BP / MBEL55E).